Reading from the N-terminus, the 187-residue chain is Elongation factor P (187 aa).

This sequence belongs to the elongation factor P family.

It is found in the cytoplasm. It functions in the pathway protein biosynthesis; polypeptide chain elongation. Functionally, involved in peptide bond synthesis. Stimulates efficient translation and peptide-bond synthesis on native or reconstituted 70S ribosomes in vitro. Probably functions indirectly by altering the affinity of the ribosome for aminoacyl-tRNA, thus increasing their reactivity as acceptors for peptidyl transferase. The protein is Elongation factor P of Kocuria rhizophila (strain ATCC 9341 / DSM 348 / NBRC 103217 / DC2201).